Here is a 134-residue protein sequence, read N- to C-terminus: Arsenate reductase (134 aa).

Residues Cys-11, Cys-83, and Cys-90 each act as nucleophile in the active site. Intrachain disulfides connect Cys-11/Cys-83 and Cys-83/Cys-90.

This sequence belongs to the low molecular weight phosphotyrosine protein phosphatase family. Thioredoxin-coupled ArsC subfamily.

It localises to the cytoplasm. It carries out the reaction arsenate + [thioredoxin]-dithiol + H(+) = arsenite + [thioredoxin]-disulfide + H2O. Its function is as follows. Catalyzes the reduction of arsenate [As(V)] to arsenite [As(III)]. In Bacillus cereus (strain AH187), this protein is Arsenate reductase.